The primary structure comprises 304 residues: Cell surface-binding protein OPG105 (304 aa).

The 235-residue stretch at 1-235 (MPQQLSPINI…NDDTQVYYSG (235 aa)) folds into the Alpha-carbonic anhydrase domain. The Virion surface portion of the chain corresponds to 1–275 (MPQQLSPINI…YQKYIEENKT (275 aa)). The helical transmembrane segment at 276–294 (FAIIAIVFVFILTAILFFM) threads the bilayer. Residues 295–304 (SRRYSREKQN) are Intravirion-facing.

It belongs to the alpha-carbonic anhydrase family. In terms of assembly, homodimer; disulfide-linked. In terms of processing, apparently non-glycosylated.

Its subcellular location is the virion membrane. Binds to chondroitin sulfate on the cell surface to provide virion attachment to target cell. The sequence is that of Cell surface-binding protein OPG105 (OPG105) from Bos taurus (Bovine).